The following is a 501-amino-acid chain: Dynein regulatory complex subunit 5 (501 aa).

A compositionally biased stretch (polar residues) spans 1–23; that stretch reads MQDTVTTSALLDPSHSSVSTQDN. 2 disordered regions span residues 1–56 and 202–222; these read MQDT…HPRA and LPAQ…EMEE. Residues 24 to 34 show a composition bias toward low complexity; that stretch reads SSTGGHTSSTS. 5 LRR repeats span residues 308–321, 335–355, 363–383, 391–411, and 419–439; these read VLEE…LIGD, RLRV…QSLA, NLIS…QALA, CLTT…TLLS, and TLTS…KQLL.

The protein belongs to the DRC5 family. Component of the nexin-dynein regulatory complex (N-DRC). Interacts with DRC1. Interacts with FBXL13/DRC6, DRC3 and DRC7.

The protein localises to the cell projection. The protein resides in the cilium. It localises to the flagellum. Its subcellular location is the cytoplasm. It is found in the cytoskeleton. The protein localises to the flagellum axoneme. In terms of biological role, component of the nexin-dynein regulatory complex (N-DRC) a key regulator of ciliary/flagellar motility which maintains the alignment and integrity of the distal axoneme and regulates microtubule sliding in motile axonemes. May play a role in the assembly of N-DRC. May be required for sperm motility. The sequence is that of Dynein regulatory complex subunit 5 (TCTE1) from Homo sapiens (Human).